The chain runs to 378 residues: Erythronate-4-phosphate dehydrogenase (378 aa).

Substrate-binding residues include Ser-45 and Thr-67. Asp-147 contacts NAD(+). Arg-209 is a catalytic residue. Asp-233 provides a ligand contact to NAD(+). Residue Glu-238 is part of the active site. His-255 serves as the catalytic Proton donor. Gly-258 provides a ligand contact to NAD(+). Position 259 (Tyr-259) interacts with substrate.

The protein belongs to the D-isomer specific 2-hydroxyacid dehydrogenase family. PdxB subfamily. As to quaternary structure, homodimer.

It localises to the cytoplasm. It catalyses the reaction 4-phospho-D-erythronate + NAD(+) = (R)-3-hydroxy-2-oxo-4-phosphooxybutanoate + NADH + H(+). The protein operates within cofactor biosynthesis; pyridoxine 5'-phosphate biosynthesis; pyridoxine 5'-phosphate from D-erythrose 4-phosphate: step 2/5. Catalyzes the oxidation of erythronate-4-phosphate to 3-hydroxy-2-oxo-4-phosphonooxybutanoate. The protein is Erythronate-4-phosphate dehydrogenase of Shewanella denitrificans (strain OS217 / ATCC BAA-1090 / DSM 15013).